Reading from the N-terminus, the 1435-residue chain is DNA polymerase III PolC-type (1435 aa).

One can recognise an Exonuclease domain in the interval 420–576 (YVVFDVETTG…YDTEATGYLL (157 aa)).

The protein belongs to the DNA polymerase type-C family. PolC subfamily.

Its subcellular location is the cytoplasm. The catalysed reaction is DNA(n) + a 2'-deoxyribonucleoside 5'-triphosphate = DNA(n+1) + diphosphate. Functionally, required for replicative DNA synthesis. This DNA polymerase also exhibits 3' to 5' exonuclease activity. In Bacillus cereus (strain ATCC 14579 / DSM 31 / CCUG 7414 / JCM 2152 / NBRC 15305 / NCIMB 9373 / NCTC 2599 / NRRL B-3711), this protein is DNA polymerase III PolC-type.